A 28-amino-acid polypeptide reads, in one-letter code: Cyclotide vodo I3 (28 aa).

3 disulfide bridges follow: Cys-4/Cys-18, Cys-8/Cys-20, and Cys-13/Cys-25.

In terms of processing, this is a cyclic peptide. Contains 3 disulfide bonds.

Its function is as follows. Probably participates in a plant defense mechanism. In Viola odorata (Sweet violet), this protein is Cyclotide vodo I3.